A 533-amino-acid chain; its full sequence is Sterol 26-hydroxylase, mitochondrial (533 aa).

A mitochondrion-targeting transit peptide spans 1-32 (MAVLSRMRLRWALLDTRVMGHGLCPQGARAKA). The tract at residues 38-58 (LRDHESTEGPGTGQDRPRLRS) is disordered. N6-acetyllysine occurs at positions 142 and 375. Residues 386-400 (PLLKAVIKETLRLYP) form a sterol-binding region. Residue Cys-479 coordinates heme. Lys-512 and Lys-523 each carry N6-acetyllysine.

The protein belongs to the cytochrome P450 family. In terms of assembly, interacts with HSP70; this interaction is required for initial targeting to mitochondria. Heme serves as cofactor. As to expression, expressed in liver, kidney and ovary.

The protein resides in the mitochondrion inner membrane. The enzyme catalyses 5beta-cholestane-3alpha,7alpha,12alpha-triol + 6 reduced [adrenodoxin] + 3 O2 + 5 H(+) = (25R)-3alpha,7alpha,12alpha-trihydroxy-5beta-cholestan-26-oate + 6 oxidized [adrenodoxin] + 4 H2O. The catalysed reaction is cholestanol + 2 reduced [adrenodoxin] + O2 + 2 H(+) = (25R)-26-hydroxycholestanol + 2 oxidized [adrenodoxin] + H2O. It catalyses the reaction (25R)-3beta-hydroxycholest-5-en-7-one-26-al + 2 reduced [adrenodoxin] + O2 + H(+) = (25R)-3beta-hydroxycholest-5-en-7-one-26-oate + 2 oxidized [adrenodoxin] + H2O. It carries out the reaction (25R)-3beta,26-dihydroxycholest-5-en-7-one + 2 reduced [adrenodoxin] + O2 + 2 H(+) = (25R)-3beta-hydroxycholest-5-en-7-one-26-al + 2 oxidized [adrenodoxin] + 2 H2O. The enzyme catalyses 7-oxocholesterol + 2 reduced [adrenodoxin] + O2 + 2 H(+) = (25R)-3beta,26-dihydroxycholest-5-en-7-one + 2 oxidized [adrenodoxin] + H2O. The catalysed reaction is calciol + 2 reduced [adrenodoxin] + O2 + 2 H(+) = calcidiol + 2 oxidized [adrenodoxin] + H2O. It catalyses the reaction (25R)-5beta-cholestane-3alpha,7alpha,12alpha,26-tetrol + 2 reduced [adrenodoxin] + O2 + 2 H(+) = (25R)-3alpha,7alpha,12alpha-trihydroxy-5beta-cholestan-26-al + 2 oxidized [adrenodoxin] + 2 H2O. It carries out the reaction 2 reduced [adrenodoxin] + cholesterol + O2 + 2 H(+) = (25R)-cholest-5-ene-3beta,26-diol + 2 oxidized [adrenodoxin] + H2O. The enzyme catalyses (25R)-3beta,4beta-dihydroxycholest-5-en-26-al + 2 reduced [adrenodoxin] + O2 + H(+) = (25R)-3beta,4beta-dihydroxycholest-5-en-26-oate + 2 oxidized [adrenodoxin] + H2O. The catalysed reaction is (25R)-4beta,26-dihydroxycholesterol + 2 reduced [adrenodoxin] + O2 + 2 H(+) = (25R)-3beta,4beta-dihydroxycholest-5-en-26-al + 2 oxidized [adrenodoxin] + 2 H2O. It catalyses the reaction 4beta-hydroxycholesterol + 2 reduced [adrenodoxin] + O2 + 2 H(+) = (25R)-4beta,26-dihydroxycholesterol + 2 oxidized [adrenodoxin] + H2O. It carries out the reaction (25R)-3beta-hydroxy-5-cholesten-26-al + 2 reduced [adrenodoxin] + O2 + H(+) = (25R)-3beta-hydroxy-5-cholestenoate + 2 oxidized [adrenodoxin] + H2O. The enzyme catalyses (25R)-cholest-5-ene-3beta,26-diol + 2 reduced [adrenodoxin] + O2 + 2 H(+) = (25R)-3beta-hydroxy-5-cholesten-26-al + 2 oxidized [adrenodoxin] + 2 H2O. The catalysed reaction is (25R)-3alpha,7alpha,12alpha-trihydroxy-5beta-cholestan-26-al + 2 reduced [adrenodoxin] + O2 + H(+) = (25R)-3alpha,7alpha,12alpha-trihydroxy-5beta-cholestan-26-oate + 2 oxidized [adrenodoxin] + H2O. It catalyses the reaction 5beta-cholestane-3alpha,7alpha,12alpha-triol + 2 reduced [adrenodoxin] + O2 + 2 H(+) = (25R)-5beta-cholestane-3alpha,7alpha,12alpha,26-tetrol + 2 oxidized [adrenodoxin] + H2O. Its pathway is hormone biosynthesis; cholecalciferol biosynthesis. It functions in the pathway steroid metabolism; cholesterol degradation. It participates in lipid metabolism; bile acid biosynthesis. Functionally, cytochrome P450 monooxygenase that catalyzes regio- and stereospecific hydroxylation of cholesterol and its derivatives. Hydroxylates (with R stereochemistry) the terminal methyl group of cholesterol side-chain in a three step reaction to yield at first a C26 alcohol, then a C26 aldehyde and finally a C26 acid. Regulates cholesterol homeostasis by catalyzing the conversion of excess cholesterol to bile acids via both the 'neutral' (classic) and the 'acid' (alternative) pathways. May also regulate cholesterol homeostasis via generation of active oxysterols, which act as ligands for NR1H2 and NR1H3 nuclear receptors, modulating the transcription of genes involved in lipid metabolism. Plays a role in cholestanol metabolism in the cerebellum. Similarly to cholesterol, hydroxylates cholestanol and may facilitate sterol diffusion through the blood-brain barrier to the systemic circulation for further degradation. Also hydroxylates retinal 7-ketocholesterol, a noxious oxysterol with pro-inflammatory and pro-apoptotic effects, and may play a role in its elimination from the retinal pigment epithelium. May play a redundant role in vitamin D biosynthesis. Catalyzes 25-hydroxylation of vitamin D3 that is required for its conversion to a functionally active form. The chain is Sterol 26-hydroxylase, mitochondrial (Cyp27a1) from Rattus norvegicus (Rat).